The chain runs to 122 residues: Small ribosomal subunit protein uS13 (122 aa).

Residues 95–122 (GLPVRGQRTHTNARTRKGPAKSIAGKKK) form a disordered region.

It belongs to the universal ribosomal protein uS13 family. Part of the 30S ribosomal subunit. Forms a loose heterodimer with protein S19. Forms two bridges to the 50S subunit in the 70S ribosome.

Its function is as follows. Located at the top of the head of the 30S subunit, it contacts several helices of the 16S rRNA. In the 70S ribosome it contacts the 23S rRNA (bridge B1a) and protein L5 of the 50S subunit (bridge B1b), connecting the 2 subunits; these bridges are implicated in subunit movement. Contacts the tRNAs in the A and P-sites. The protein is Small ribosomal subunit protein uS13 of Nitrobacter hamburgensis (strain DSM 10229 / NCIMB 13809 / X14).